Here is a 185-residue protein sequence, read N- to C-terminus: Ribosome-recycling factor (185 aa).

Belongs to the RRF family.

It localises to the cytoplasm. Its function is as follows. Responsible for the release of ribosomes from messenger RNA at the termination of protein biosynthesis. May increase the efficiency of translation by recycling ribosomes from one round of translation to another. The chain is Ribosome-recycling factor from Pseudomonas putida (strain GB-1).